The chain runs to 160 residues: Ribosomal RNA large subunit methyltransferase H (160 aa).

Residues Leu77, Gly109, and 128 to 133 each bind S-adenosyl-L-methionine; that span reads FGRITL.

Belongs to the RNA methyltransferase RlmH family. In terms of assembly, homodimer.

The protein localises to the cytoplasm. The catalysed reaction is pseudouridine(1915) in 23S rRNA + S-adenosyl-L-methionine = N(3)-methylpseudouridine(1915) in 23S rRNA + S-adenosyl-L-homocysteine + H(+). In terms of biological role, specifically methylates the pseudouridine at position 1915 (m3Psi1915) in 23S rRNA. This is Ribosomal RNA large subunit methyltransferase H from Oenococcus oeni (strain ATCC BAA-331 / PSU-1).